The following is a 1061-amino-acid chain: Lysine-specific demethylase jmjd-3.1 (1061 aa).

Disordered regions lie at residues 30–49 and 256–417; these read VKNS…MRPV and KSLS…KRRT. Residues 271–287 are compositionally biased toward polar residues; that stretch reads QHTNSVGSSIGTTSGDS. Residues 310 to 320 are compositionally biased toward low complexity; that stretch reads STSSEFTETTS. A compositionally biased stretch (polar residues) spans 321–330; that stretch reads VANQTESNAG. Residues 369–417 are required for nuclear localization; the sequence is KKKEQSATEPPIPRTKRAYTKNPNTIRKRRMKKNQSDDEEDDGPPKRRT. Residues 418 to 759 form a required for binding of unc-3 and for function in Y-to-PDA transdifferentiation region; sequence INYQIEFRDA…FGTNIDLLSE (342 aa). In terms of domain architecture, JmjC spans 760–923; the sequence is NFKKQMNEIE…LATSIVAHDH (164 aa). Residues His-811, Glu-813, and His-891 each coordinate Fe cation. Zn(2+) contacts are provided by Cys-998, Cys-1001, Cys-1025, and Cys-1028.

The protein belongs to the UTX family. In terms of assembly, interacts with wdr-5.1 and unc-3. It depends on Fe(2+) as a cofactor. In terms of tissue distribution, mainly expressed in head and tail.

The protein localises to the nucleus. Histone demethylase that specifically demethylates trimethylated 'Lys-27' of histone H3, a mark associated with transcriptional repression, thereby playing a central role in the histone code. Involved in the transcriptional regulation of the heat shock response, unfolded protein response and possibly other stress response target genes. Required for gonad development and organization. Required for the robust transdifferentiation of the Y rectal epithelial cell to the PDA motor neuron during larval development. Acts cell-autonomously in Y-to-PDA transdifferentiation, which depends on the demethylase activity and on recognition of the H3 tail. Cooperates with set-2 and unc-3 to ensure robust Y-to-PDA transdifferentiation. Promotes mitochondrial stress-induced longevity. Involved in lifespan regulation. The protein is Lysine-specific demethylase jmjd-3.1 of Caenorhabditis elegans.